Consider the following 345-residue polypeptide: 3-isopropylmalate dehydrogenase (345 aa).

74–87 (GPKWDGLPRKISPE) is a binding site for NAD(+). R94, R104, R132, and D217 together coordinate substrate. Residues D217, D241, and D245 each contribute to the Mg(2+) site. Position 274–286 (274–286 (GSAPDIAGKGIAN)) interacts with NAD(+).

The protein belongs to the isocitrate and isopropylmalate dehydrogenases family. LeuB type 1 subfamily. As to quaternary structure, homodimer. It depends on Mg(2+) as a cofactor. Requires Mn(2+) as cofactor.

The protein resides in the cytoplasm. The catalysed reaction is (2R,3S)-3-isopropylmalate + NAD(+) = 4-methyl-2-oxopentanoate + CO2 + NADH. It functions in the pathway amino-acid biosynthesis; L-leucine biosynthesis; L-leucine from 3-methyl-2-oxobutanoate: step 3/4. Its function is as follows. Catalyzes the oxidation of 3-carboxy-2-hydroxy-4-methylpentanoate (3-isopropylmalate) to 3-carboxy-4-methyl-2-oxopentanoate. The product decarboxylates to 4-methyl-2 oxopentanoate. The protein is 3-isopropylmalate dehydrogenase (leuB) of Thermus thermophilus.